The chain runs to 71 residues: Small ribosomal subunit protein bS18 (71 aa).

This sequence belongs to the bacterial ribosomal protein bS18 family. In terms of assembly, part of the 30S ribosomal subunit. Forms a tight heterodimer with protein bS6.

In terms of biological role, binds as a heterodimer with protein bS6 to the central domain of the 16S rRNA, where it helps stabilize the platform of the 30S subunit. The chain is Small ribosomal subunit protein bS18 from Microcystis aeruginosa (strain NIES-843 / IAM M-2473).